The sequence spans 221 residues: Protein N-terminal glutamine amidohydrolase (221 aa).

An N-acetylserine modification is found at S2. Active-site residues include C23, H79, and D97.

It belongs to the NTAQ1 family. Monomer.

It carries out the reaction N-terminal L-glutaminyl-[protein] + H2O = N-terminal L-glutamyl-[protein] + NH4(+). Functionally, mediates the side-chain deamidation of N-terminal glutamine residues to glutamate, an important step in N-end rule pathway of protein degradation. Conversion of the resulting N-terminal glutamine to glutamate renders the protein susceptible to arginylation, polyubiquitination and degradation as specified by the N-end rule. Does not act on substrates with internal or C-terminal glutamine and does not act on non-glutamine residues in any position. Involved in immune response. Controls the expression of specific defense-response genes, activates the synthesis pathway for the phytoalexin camalexin, and influences basal resistance to the hemibiotroph pathogen Pseudomonas syringae pv tomato (Pst). The protein is Protein N-terminal glutamine amidohydrolase of Arabidopsis thaliana (Mouse-ear cress).